Consider the following 212-residue polypeptide: Secreted and transmembrane protein 1b (212 aa).

The N-terminal stretch at Met-1–Ala-28 is a signal peptide. The Extracellular segment spans residues His-29–Glu-160. Cys-38 and Cys-55 form a disulfide bridge. Asn-56, Asn-85, Asn-114, and Asn-130 each carry an N-linked (GlcNAc...) asparagine glycan. Residues Val-161–Trp-181 form a helical membrane-spanning segment. At Tyr-182–Pro-212 the chain is on the cytoplasmic side.

Belongs to the SECTM family. In terms of assembly, interacts with CD7.

It localises to the cell membrane. The protein resides in the secreted. Functionally, may be involved in thymocyte signaling. The chain is Secreted and transmembrane protein 1b (Sectm1b) from Mus musculus (Mouse).